A 144-amino-acid chain; its full sequence is Maximins 1/H12 (144 aa).

The signal sequence occupies residues 1-18 (MNFKYIVAVSFLIASAYA). Residues 19–43 (RSEENDEQSLSQRDVLEEESLREIR) constitute a propeptide that is removed on maturation. Asn-70 bears the Asparagine amide mark. The propeptide occupies 74 to 123 (TAEEHEVMKRLEVVMRDLDSLDYPEEASERETRDFNQEEIANLYTKKEKR). Ile-143 carries the post-translational modification Isoleucine amide.

It belongs to the bombinin family. Expressed by the skin glands.

Its subcellular location is the secreted. Maximin-1 shows antibacterial activity against both Gram-positive and Gram-negative bacteria. It also shows antimicrobial activity against the fungus C.albicans, but not against A.flavus nor P.uticale. It has little hemolytic activity. It possess a significant cytotoxicity against tumor cell lines. It does not possess a significant anti-HIV activity. It shows high spermicidal activity. Its function is as follows. Maximin-H12 shows antimicrobial activity against bacteria and against the fungus C.albicans. Shows strong hemolytic activity. The protein is Maximins 1/H12 of Bombina maxima (Giant fire-bellied toad).